Consider the following 131-residue polypeptide: Large-conductance mechanosensitive channel (131 aa).

3 helical membrane passes run Phe8–Gly28, Ile30–Val50, and Gly67–Val87.

This sequence belongs to the MscL family. As to quaternary structure, homopentamer.

The protein localises to the cell membrane. In terms of biological role, channel that opens in response to stretch forces in the membrane lipid bilayer. May participate in the regulation of osmotic pressure changes within the cell. In Geobacillus sp. (strain WCH70), this protein is Large-conductance mechanosensitive channel.